The chain runs to 122 residues: Putative iron-sulfur cluster insertion protein ErpA (122 aa).

3 residues coordinate iron-sulfur cluster: cysteine 50, cysteine 114, and cysteine 116.

Belongs to the HesB/IscA family. In terms of assembly, homodimer. Iron-sulfur cluster serves as cofactor.

Required for insertion of 4Fe-4S clusters. The protein is Putative iron-sulfur cluster insertion protein ErpA of Burkholderia mallei (strain NCTC 10247).